A 158-amino-acid chain; its full sequence is NAD(P)H-quinone oxidoreductase subunit J, chloroplastic (158 aa).

The protein belongs to the complex I 30 kDa subunit family. In terms of assembly, NDH is composed of at least 16 different subunits, 5 of which are encoded in the nucleus.

Its subcellular location is the plastid. It is found in the chloroplast thylakoid membrane. The enzyme catalyses a plastoquinone + NADH + (n+1) H(+)(in) = a plastoquinol + NAD(+) + n H(+)(out). It catalyses the reaction a plastoquinone + NADPH + (n+1) H(+)(in) = a plastoquinol + NADP(+) + n H(+)(out). NDH shuttles electrons from NAD(P)H:plastoquinone, via FMN and iron-sulfur (Fe-S) centers, to quinones in the photosynthetic chain and possibly in a chloroplast respiratory chain. The immediate electron acceptor for the enzyme in this species is believed to be plastoquinone. Couples the redox reaction to proton translocation, and thus conserves the redox energy in a proton gradient. The polypeptide is NAD(P)H-quinone oxidoreductase subunit J, chloroplastic (Oenothera argillicola (Appalachian evening primrose)).